Consider the following 439-residue polypeptide: Serine hydroxymethyltransferase (439 aa).

Residues 1–20 (MNAPHRDETTASHRDDGFFT) are disordered. (6S)-5,6,7,8-tetrahydrofolate-binding positions include Leu136 and 140–142 (GHL). Residue Lys245 is modified to N6-(pyridoxal phosphate)lysine.

This sequence belongs to the SHMT family. As to quaternary structure, homodimer. Pyridoxal 5'-phosphate is required as a cofactor.

It is found in the cytoplasm. It catalyses the reaction (6R)-5,10-methylene-5,6,7,8-tetrahydrofolate + glycine + H2O = (6S)-5,6,7,8-tetrahydrofolate + L-serine. The protein operates within one-carbon metabolism; tetrahydrofolate interconversion. Its pathway is amino-acid biosynthesis; glycine biosynthesis; glycine from L-serine: step 1/1. Its function is as follows. Catalyzes the reversible interconversion of serine and glycine with tetrahydrofolate (THF) serving as the one-carbon carrier. This reaction serves as the major source of one-carbon groups required for the biosynthesis of purines, thymidylate, methionine, and other important biomolecules. Also exhibits THF-independent aldolase activity toward beta-hydroxyamino acids, producing glycine and aldehydes, via a retro-aldol mechanism. The chain is Serine hydroxymethyltransferase from Jannaschia sp. (strain CCS1).